Consider the following 186-residue polypeptide: Elongation factor P (186 aa).

Belongs to the elongation factor P family.

Its subcellular location is the cytoplasm. It functions in the pathway protein biosynthesis; polypeptide chain elongation. In terms of biological role, involved in peptide bond synthesis. Stimulates efficient translation and peptide-bond synthesis on native or reconstituted 70S ribosomes in vitro. Probably functions indirectly by altering the affinity of the ribosome for aminoacyl-tRNA, thus increasing their reactivity as acceptors for peptidyl transferase. This Cupriavidus pinatubonensis (strain JMP 134 / LMG 1197) (Cupriavidus necator (strain JMP 134)) protein is Elongation factor P.